A 424-amino-acid polypeptide reads, in one-letter code: Histidine--tRNA ligase (424 aa).

It belongs to the class-II aminoacyl-tRNA synthetase family. In terms of assembly, homodimer.

It is found in the cytoplasm. The enzyme catalyses tRNA(His) + L-histidine + ATP = L-histidyl-tRNA(His) + AMP + diphosphate + H(+). This chain is Histidine--tRNA ligase, found in Shewanella pealeana (strain ATCC 700345 / ANG-SQ1).